A 102-amino-acid polypeptide reads, in one-letter code: Small ribosomal subunit protein uS10 (102 aa).

The protein belongs to the universal ribosomal protein uS10 family. In terms of assembly, part of the 30S ribosomal subunit.

Involved in the binding of tRNA to the ribosomes. This is Small ribosomal subunit protein uS10 from Methanothermobacter thermautotrophicus (strain ATCC 29096 / DSM 1053 / JCM 10044 / NBRC 100330 / Delta H) (Methanobacterium thermoautotrophicum).